Consider the following 295-residue polypeptide: MKTGTWRVKTGFARMLKGGVVMDVTNVEQAQIAEDAGAVAVMVLEKVPADIRAAGGVARMCDPAKIEEIMDHVTIPVMAKCRIGHVAEAQVLEAIGVDMIDESEVLTPADEEHHINKWEFEVPFVCGARNLGEALRRIAEGAAMIRTKGEAGTGNVAEAVRHMRIIRREISELTRLDKEELYGKAKEYGVPFDLVAEVASLGRLPVVNFAAGGIATPADAALMMQLGADGIFVGSGIFKSDRPQEMAEAIVEATAYYDDPEVVAEVSKNLGDEVAMRGLEISEIPEEERMQLRGE.

Asp-23 contacts D-ribose 5-phosphate. Lys-80 serves as the catalytic Schiff-base intermediate with D-ribose 5-phosphate. Residue Gly-152 coordinates D-ribose 5-phosphate. A D-glyceraldehyde 3-phosphate-binding site is contributed by Arg-164. D-ribose 5-phosphate contacts are provided by residues Gly-213 and 234 to 235 (GS).

The protein belongs to the PdxS/SNZ family. As to quaternary structure, in the presence of PdxT, forms a dodecamer of heterodimers.

It carries out the reaction aldehydo-D-ribose 5-phosphate + D-glyceraldehyde 3-phosphate + L-glutamine = pyridoxal 5'-phosphate + L-glutamate + phosphate + 3 H2O + H(+). It functions in the pathway cofactor biosynthesis; pyridoxal 5'-phosphate biosynthesis. Catalyzes the formation of pyridoxal 5'-phosphate from ribose 5-phosphate (RBP), glyceraldehyde 3-phosphate (G3P) and ammonia. The ammonia is provided by the PdxT subunit. Can also use ribulose 5-phosphate and dihydroxyacetone phosphate as substrates, resulting from enzyme-catalyzed isomerization of RBP and G3P, respectively. This is Pyridoxal 5'-phosphate synthase subunit PdxS from Methanopyrus kandleri (strain AV19 / DSM 6324 / JCM 9639 / NBRC 100938).